Consider the following 82-residue polypeptide: Mu-conotoxin GVIIJ (82 aa).

Residues 1–22 form the signal peptide; sequence MKLTCVVIVAALLLTACQLITA. A propeptide spanning residues 23-47 is cleaved from the precursor; the sequence is LDCGGTQKHRALRSTIKLSLLRQHR. The residue at position 49 (Trp49) is a 6'-bromotryptophan. Intrachain disulfides connect Cys50/Cys65, Cys57/Cys69, and Cys64/Cys76. Residue Pro53 is modified to 4-hydroxyproline. Cys71 is a binding site for a protein.

It belongs to the conotoxin O1 superfamily. In terms of processing, cys-71 is a key residue that tethers to the channel by covalent attachment, leading to nearly irreversible inhibition (k(off) very low). In order to determine the solution structure without dimerization, this residue was mutated to Cys. As to expression, expressed by the venom duct.

The protein resides in the secreted. Mu-conotoxins block voltage-gated sodium channels (Nav). This toxin (GVIIJ(SSG)) blocks Nav1.1/SCN1A (Kd=11 nM), Nav1.2/SCN2A (Kd=11 nM), Nav1.3/SCN3A (Kd=15 nM), Nav1.4/SCN4A (Kd=4.7 nM), Nav1.6/SCN8A (Kd=360 nM) and Nav1.7/SCN9A (Kd=41 nM). It binds the channel at the newly described site 8, which is composed by two surfaces whose one contains a non-disulfide-bonded cysteine (which is free to covalently bind the toxin Cys-71). It is noteworthy that coexpression of subunits beta-2 or beta-4 (but not beta-1 or beta-3) protects rNav1.1-1.7 against block by the toxin, since these subunits (thanks to their extracellular domain) covalently bind to the key cysteine of the channel, thus preventing the covalent binding of the toxin. The polypeptide is Mu-conotoxin GVIIJ (Conus geographus (Geography cone)).